The primary structure comprises 160 residues: UPF0225 protein CGSHiGG_04185 (160 aa).

The protein belongs to the UPF0225 family.

The polypeptide is UPF0225 protein CGSHiGG_04185 (Haemophilus influenzae (strain PittGG)).